Here is a 133-residue protein sequence, read N- to C-terminus: Ribosome-binding factor A (133 aa).

Belongs to the RbfA family. In terms of assembly, monomer. Binds 30S ribosomal subunits, but not 50S ribosomal subunits or 70S ribosomes.

Its subcellular location is the cytoplasm. Its function is as follows. One of several proteins that assist in the late maturation steps of the functional core of the 30S ribosomal subunit. Associates with free 30S ribosomal subunits (but not with 30S subunits that are part of 70S ribosomes or polysomes). Required for efficient processing of 16S rRNA. May interact with the 5'-terminal helix region of 16S rRNA. The chain is Ribosome-binding factor A from Pseudomonas fluorescens (strain Pf0-1).